The sequence spans 460 residues: Cysteine--tRNA ligase (460 aa).

Cysteine 28 is a binding site for Zn(2+). The 'HIGH' region motif lies at 30–40 (MTVYDYCHLGH). Positions 209, 234, and 238 each coordinate Zn(2+). A 'KMSKS' region motif is present at residues 266 to 270 (KMSKS). Lysine 269 contributes to the ATP binding site.

This sequence belongs to the class-I aminoacyl-tRNA synthetase family. As to quaternary structure, monomer. Requires Zn(2+) as cofactor.

It localises to the cytoplasm. The enzyme catalyses tRNA(Cys) + L-cysteine + ATP = L-cysteinyl-tRNA(Cys) + AMP + diphosphate. This is Cysteine--tRNA ligase from Thioalkalivibrio sulfidiphilus (strain HL-EbGR7).